A 346-amino-acid chain; its full sequence is Centromere protein L (346 aa).

Ser41 bears the Phosphoserine mark. A Phosphothreonine modification is found at Thr45. Ser55 is subject to Phosphoserine.

It belongs to the CENP-L/IML3 family. As to quaternary structure, component of the CENPA-CAD complex, composed of CENPI, CENPK, CENPL, CENPO, CENPP, CENPQ, CENPR and CENPS. The CENPA-CAD complex interacts with the CENPA-NAC complex, at least composed of CENPA, CENPC, CENPH, CENPM, CENPN, CENPT and CENPU.

The protein localises to the nucleus. It is found in the chromosome. Its subcellular location is the centromere. In terms of biological role, component of the CENPA-CAD (nucleosome distal) complex, a complex recruited to centromeres which is involved in assembly of kinetochore proteins, mitotic progression and chromosome segregation. May be involved in incorporation of newly synthesized CENPA into centromeres via its interaction with the CENPA-NAC complex. The protein is Centromere protein L (CENPL) of Bos taurus (Bovine).